The sequence spans 283 residues: Thymidylate synthase (283 aa).

Arginine 22 contributes to the dUMP binding site. Cysteine 160 acts as the Nucleophile in catalysis. DUMP-binding positions include 180-183, asparagine 191, and 221-223; these read RSCD and HIY. Aspartate 183 is a (6R)-5,10-methylene-5,6,7,8-tetrahydrofolate binding site. Position 282 (serine 282) interacts with (6R)-5,10-methylene-5,6,7,8-tetrahydrofolate.

This sequence belongs to the thymidylate synthase family. Bacterial-type ThyA subfamily. Homodimer.

Its subcellular location is the cytoplasm. It carries out the reaction dUMP + (6R)-5,10-methylene-5,6,7,8-tetrahydrofolate = 7,8-dihydrofolate + dTMP. Its pathway is pyrimidine metabolism; dTTP biosynthesis. In terms of biological role, catalyzes the reductive methylation of 2'-deoxyuridine-5'-monophosphate (dUMP) to 2'-deoxythymidine-5'-monophosphate (dTMP) while utilizing 5,10-methylenetetrahydrofolate (mTHF) as the methyl donor and reductant in the reaction, yielding dihydrofolate (DHF) as a by-product. This enzymatic reaction provides an intracellular de novo source of dTMP, an essential precursor for DNA biosynthesis. This is Thymidylate synthase from Haemophilus influenzae (strain PittEE).